The chain runs to 458 residues: DNA repair protein RadA (458 aa).

The C4-type zinc finger occupies cysteine 11–cysteine 28. Residue glycine 100 to serine 107 coordinates ATP. A RadA KNRFG motif motif is present at residues lysine 256–glycine 260. The segment at aspartate 355–leucine 458 is lon-protease-like.

It belongs to the RecA family. RadA subfamily.

DNA-dependent ATPase involved in processing of recombination intermediates, plays a role in repairing DNA breaks. Stimulates the branch migration of RecA-mediated strand transfer reactions, allowing the 3' invading strand to extend heteroduplex DNA faster. Binds ssDNA in the presence of ADP but not other nucleotides, has ATPase activity that is stimulated by ssDNA and various branched DNA structures, but inhibited by SSB. Does not have RecA's homology-searching function. The chain is DNA repair protein RadA from Haemophilus influenzae (strain ATCC 51907 / DSM 11121 / KW20 / Rd).